We begin with the raw amino-acid sequence, 249 residues long: Protection of telomeres protein poz1 (249 aa).

Interacts with pot1, rap1 and tpz1.

The protein resides in the cytoplasm. Its subcellular location is the nucleus. It localises to the chromosome. The protein localises to the telomere. Its function is as follows. Telomeric DNA-binding protein that negatively regulates telomerase and telomere length. This Schizosaccharomyces pombe (strain 972 / ATCC 24843) (Fission yeast) protein is Protection of telomeres protein poz1 (poz1).